The sequence spans 417 residues: NADH-quinone oxidoreductase subunit D (417 aa).

It belongs to the complex I 49 kDa subunit family. As to quaternary structure, NDH-1 is composed of 14 different subunits. Subunits NuoB, C, D, E, F, and G constitute the peripheral sector of the complex.

The protein resides in the cell inner membrane. It carries out the reaction a quinone + NADH + 5 H(+)(in) = a quinol + NAD(+) + 4 H(+)(out). Its function is as follows. NDH-1 shuttles electrons from NADH, via FMN and iron-sulfur (Fe-S) centers, to quinones in the respiratory chain. The immediate electron acceptor for the enzyme in this species is believed to be ubiquinone. Couples the redox reaction to proton translocation (for every two electrons transferred, four hydrogen ions are translocated across the cytoplasmic membrane), and thus conserves the redox energy in a proton gradient. The protein is NADH-quinone oxidoreductase subunit D of Paraburkholderia phytofirmans (strain DSM 17436 / LMG 22146 / PsJN) (Burkholderia phytofirmans).